The chain runs to 254 residues: MLAKRIIPCLDVTGGRVVKGVNFVNLRDAGDPVELADRYNLDGADELVFLDITASSDARDIMADVVARTARKVFIPLAVGGGIRSIADARHILLSGADKVSVNTAAVRRPELITELSRELGAQAVVLAIDARRHGPGGWHVYTRGGRDDEGMDAVAWAARGEALGAGEVLLTSMDTDGVQDGFDCALTMAVSRATHIPVIASGGAGKPEHFVRVLTDGCADAALAASIFHYGTYTVNQLKEALDKRGIPVRVTA.

Active-site residues include D11 and D130.

It belongs to the HisA/HisF family. Heterodimer of HisH and HisF.

The protein localises to the cytoplasm. It catalyses the reaction 5-[(5-phospho-1-deoxy-D-ribulos-1-ylimino)methylamino]-1-(5-phospho-beta-D-ribosyl)imidazole-4-carboxamide + L-glutamine = D-erythro-1-(imidazol-4-yl)glycerol 3-phosphate + 5-amino-1-(5-phospho-beta-D-ribosyl)imidazole-4-carboxamide + L-glutamate + H(+). It participates in amino-acid biosynthesis; L-histidine biosynthesis; L-histidine from 5-phospho-alpha-D-ribose 1-diphosphate: step 5/9. Its function is as follows. IGPS catalyzes the conversion of PRFAR and glutamine to IGP, AICAR and glutamate. The HisF subunit catalyzes the cyclization activity that produces IGP and AICAR from PRFAR using the ammonia provided by the HisH subunit. This is Imidazole glycerol phosphate synthase subunit HisF from Solibacter usitatus (strain Ellin6076).